Reading from the N-terminus, the 144-residue chain is Gas vesicle protein I1 (144 aa).

Residues 1–144 form a disordered region; sequence MSDKQQQKHK…SPTEDEVNDE (144 aa). Basic residues-rich tracts occupy residues 7 to 17 and 26 to 46; these read QKHKQKARQAR and KARR…TRNR. Residues 75-94 are compositionally biased toward polar residues; that stretch reads MPPQKSNAENAVRNSHSTVP. The segment covering 122–136 has biased composition (low complexity); it reads SEASAPSDESASGSP.

The protein belongs to the gas vesicle GvpI family. In terms of assembly, gvpF to GvpM interact with each other in vitro, and may form multi-subunit complex(es). Interacts with GvpC1 and GvpO.

The protein localises to the gas vesicle. Its function is as follows. Proteins GvpF to GvpM might be involved in nucleating gas vesicle formation. A minor component of the gas vesicle. Gas vesicles are hollow, gas filled proteinaceous nanostructures found in several microbial planktonic microorganisms. They allow positioning of halobacteria at the optimal depth for growth in the poorly aerated, shallow brine pools of their habitat. Functionally, expression of a 9.5 kb p-vac DNA fragment containing 2 divergently transcribed regions (gvpD-gvpE-gvpF-gvpG-gvpH-gvpI-gvpJ-gvpK-gvpL-gvpM and gvpA-gvpC-gvpN-gvpO) allows H.volcanii to produce gas vesicles. A similar region restores gas vesicle production in H.halobium without the p-vac locus, but it still has the c-vac locus. The protein is Gas vesicle protein I1 (gvpI11) of Halobacterium salinarum (strain ATCC 700922 / JCM 11081 / NRC-1) (Halobacterium halobium).